A 256-amino-acid polypeptide reads, in one-letter code: Hemin import ATP-binding protein HmuV (256 aa).

In terms of domain architecture, ABC transporter spans 2 to 238 (ISAQNLVYSL…QALTMLYGAD (237 aa)). 34–41 (GPNGAGKS) provides a ligand contact to ATP.

The protein belongs to the ABC transporter superfamily. Heme (hemin) importer (TC 3.A.1.14.5) family. The complex is composed of two ATP-binding proteins (HmuV), two transmembrane proteins (HmuU) and a solute-binding protein (HmuT).

The protein localises to the cell inner membrane. Its function is as follows. Part of the ABC transporter complex HmuTUV involved in hemin import. Responsible for energy coupling to the transport system. The chain is Hemin import ATP-binding protein HmuV from Escherichia coli O6:K15:H31 (strain 536 / UPEC).